The sequence spans 123 residues: Alpha-ketoglutarate dehydrogenase subunit 4, mitochondrial (123 aa).

A mitochondrion-targeting transit peptide spans 1–8 (MIATPIRL).

The protein belongs to the alpha-ketoglutarate dehydrogenase component 4 family. As to quaternary structure, component of the 2-oxoglutarate dehydrogenase complex (OGDC), also called alpha-ketoglutarate dehydrogenase (KGDH) complex. The copmplex is composed of the catalytic subunits OGDH (2-oxoglutarate dehydrogenase KGD1; also called E1 subunit), DLST (dihydrolipoamide succinyltransferase KGD2; also called E2 subunit) and DLD (dihydrolipoamide dehydrogenase LPD1; also called E3 subunit), and the assembly factor KGD4. Within OGDC, interacts (via N-terminus) with E3 subunit and (via C-terminus) with the complex core formed by E1 and E2 subunits.

The protein localises to the mitochondrion. Molecular adapter that is necessary to a form a stable 2-oxoglutarate dehydrogenase enzyme complex (OGDC). Required for incorporation of the E3 subunit (LPD1) into the E1-E2 core (KGD1-KGD2) of mitochondrial OGDC, and acting as a stability factor for the fully assembled complex. In Saccharomyces cerevisiae (strain ATCC 204508 / S288c) (Baker's yeast), this protein is Alpha-ketoglutarate dehydrogenase subunit 4, mitochondrial.